A 205-amino-acid polypeptide reads, in one-letter code: Thymidylate kinase (205 aa).

11–18 (GVEGAGKS) contacts ATP.

The protein belongs to the thymidylate kinase family.

The catalysed reaction is dTMP + ATP = dTDP + ADP. Functionally, phosphorylation of dTMP to form dTDP in both de novo and salvage pathways of dTTP synthesis. This is Thymidylate kinase from Vesicomyosocius okutanii subsp. Calyptogena okutanii (strain HA).